A 738-amino-acid chain; its full sequence is NAD(P)H-quinone oxidoreductase subunit 5, chloroplastic (738 aa).

A run of 17 helical transmembrane segments spans residues 9–29 (WVIP…LFLI), 39–59 (IWAF…LHLS), 89–109 (VDPL…LVLI), 125–145 (FVYI…SNLI), 147–167 (IYFF…FWFT), 185–205 (GDFG…SLEF), 219–239 (NGIN…GAVA), 258–278 (TPIS…FLLA), 280–300 (LLPL…VGTI), 327–347 (LGYM…FHLI), 354–374 (ALLF…VGYS), 396–416 (TTFL…CFWS), 425–445 (WLYS…TAFY), 542–562 (LFPL…GIPF), 610–630 (SLAI…YSFF), 691–711 (GVID…GEEI), and 717–737 (GRIS…LFFI).

The protein belongs to the complex I subunit 5 family. As to quaternary structure, NDH is composed of at least 16 different subunits, 5 of which are encoded in the nucleus.

The protein resides in the plastid. The protein localises to the chloroplast thylakoid membrane. The enzyme catalyses a plastoquinone + NADH + (n+1) H(+)(in) = a plastoquinol + NAD(+) + n H(+)(out). It catalyses the reaction a plastoquinone + NADPH + (n+1) H(+)(in) = a plastoquinol + NADP(+) + n H(+)(out). Functionally, NDH shuttles electrons from NAD(P)H:plastoquinone, via FMN and iron-sulfur (Fe-S) centers, to quinones in the photosynthetic chain and possibly in a chloroplast respiratory chain. The immediate electron acceptor for the enzyme in this species is believed to be plastoquinone. Couples the redox reaction to proton translocation, and thus conserves the redox energy in a proton gradient. The chain is NAD(P)H-quinone oxidoreductase subunit 5, chloroplastic (ndhF) from Saccharum officinarum (Sugarcane).